A 248-amino-acid chain; its full sequence is ATP synthase subunit a, chloroplastic (248 aa).

5 consecutive transmembrane segments (helical) span residues 37 to 57, 96 to 116, 135 to 155, 200 to 220, and 221 to 241; these read AQVL…AFVT, VPFI…GALF, INTT…AGLH, LVVA…MMFL, and GLFT…AYIG.

Belongs to the ATPase A chain family. F-type ATPases have 2 components, CF(1) - the catalytic core - and CF(0) - the membrane proton channel. CF(1) has five subunits: alpha(3), beta(3), gamma(1), delta(1), epsilon(1). CF(0) has four main subunits: a, b, b' and c.

The protein localises to the plastid. The protein resides in the chloroplast thylakoid membrane. Key component of the proton channel; it plays a direct role in the translocation of protons across the membrane. This is ATP synthase subunit a, chloroplastic from Psilotum nudum (Whisk fern).